Consider the following 197-residue polypeptide: Potassium-transporting ATPase KdpC subunit (197 aa).

Residues 7 to 27 (PAFISLILFTLLFGLIYPLTV) traverse the membrane as a helical segment.

Belongs to the KdpC family. In terms of assembly, the system is composed of three essential subunits: KdpA, KdpB and KdpC.

It is found in the cell inner membrane. Its function is as follows. Part of the high-affinity ATP-driven potassium transport (or Kdp) system, which catalyzes the hydrolysis of ATP coupled with the electrogenic transport of potassium into the cytoplasm. This subunit acts as a catalytic chaperone that increases the ATP-binding affinity of the ATP-hydrolyzing subunit KdpB by the formation of a transient KdpB/KdpC/ATP ternary complex. This Beijerinckia indica subsp. indica (strain ATCC 9039 / DSM 1715 / NCIMB 8712) protein is Potassium-transporting ATPase KdpC subunit.